The chain runs to 275 residues: Large ribosomal subunit protein uL2 (275 aa).

A disordered region spans residues 223–275; sequence VAMNPVDHPHGGGEGRTSGGRHPVSPWGQPTKGYKTRSNKRTDKYIVRRRNKK.

Belongs to the universal ribosomal protein uL2 family. Part of the 50S ribosomal subunit. Forms a bridge to the 30S subunit in the 70S ribosome.

Its function is as follows. One of the primary rRNA binding proteins. Required for association of the 30S and 50S subunits to form the 70S ribosome, for tRNA binding and peptide bond formation. It has been suggested to have peptidyltransferase activity; this is somewhat controversial. Makes several contacts with the 16S rRNA in the 70S ribosome. This Shewanella piezotolerans (strain WP3 / JCM 13877) protein is Large ribosomal subunit protein uL2.